Here is a 526-residue protein sequence, read N- to C-terminus: Amino acid transporter heavy chain SLC3A2 (526 aa).

The interval 1 to 31 (MSQDTEVDMKDVELNELEPEKQPMNAADGAA) is disordered. Residues 1–75 (MSQDTEVDMK…AGSPGWVRTR (75 aa)) are Cytoplasmic-facing. Serine 2 is modified (phosphoserine). A Phosphothreonine modification is found at threonine 5. Residues 7–21 (VDMKDVELNELEPEK) are compositionally biased toward basic and acidic residues. Residue lysine 42 forms a Glycyl lysine isopeptide (Lys-Gly) (interchain with G-Cter in ubiquitin) linkage. Residue serine 58 is modified to Phosphoserine. Residue lysine 59 forms a Glycyl lysine isopeptide (Lys-Gly) (interchain with G-Cter in SUMO2) linkage. A helical; Signal-anchor for type II membrane protein membrane pass occupies residues 76–99 (WALLLLFWLGWLGMLAGAVVIIVR). The Extracellular segment spans residues 100–526 (APRCRELPVQ…GLLLQFPFVA (427 aa)). N-linked (GlcNAc...) asparagine glycosylation is found at asparagine 166, asparagine 259, and asparagine 263. Serine 300 carries the post-translational modification Phosphoserine. A glycan (N-linked (GlcNAc...) asparagine) is linked at asparagine 301. Serine 302 is modified (phosphoserine). N-linked (GlcNAc...) asparagine glycans are attached at residues asparagine 318, asparagine 385, and asparagine 399. Serine 420 is modified (phosphoserine). Asparagine 509 is a glycosylation site (N-linked (GlcNAc...) asparagine).

The protein belongs to the SLC3A transporter family. As to quaternary structure, disulfide-linked heterodimer with a non-glycosylated light chain (SLC7A5, SLC7A6, SLC7A7, SLC7A8, SLC7A10 or SLC7A11). Interacts with TLCD3A/CT120 and ICAM1. Constitutively and specifically associates with beta-1 integrins (alpha-2/beta-1, alpha-3/beta-1, alpha-5/beta-1 and alpha-6/beta-1), but minimally with alpha-4/beta-1. Interacts with LAPTM4B; recruits SLC3A2 and SLC7A5 to lysosomes to promote leucine uptake into these organelles and is required for mTORC1 activation. Phosphorylation on Ser-300 or Ser-302 and on Ser-420 by ecto-protein kinases favors heterotypic cell-cell interactions. Post-translationally, N-glycosylated; N-glycosylation is crucial for trafficking and stability of SLC3A2 to the plasma membrane. In terms of tissue distribution, detected on the surface of embryonic epithelial cells in the epidermis, thymus, kidney, intestine, brain choroid plexus, and in retina. Detected in adult and embryonic brain, spleen, kidney, intestine and liver, and in adult testis (at protein level). Observed in all adult tissues tested with strongest expression in kidney, small intestine, spleen, thymus and liver. Moderate expression in brain, stomach, heart, testis, lung, skin, pancreas and skeletal muscle. In brain expressed on capillary endothelia in cerebral cortex.

Its subcellular location is the apical cell membrane. It is found in the cell membrane. The protein resides in the cell junction. It localises to the lysosome membrane. The protein localises to the melanosome. Its subcellular location is the basolateral cell membrane. Acts as a chaperone that facilitates biogenesis and trafficking of functional transporters heterodimers to the plasma membrane. Forms heterodimer with SLC7 family transporters (SLC7A5, SLC7A6, SLC7A7, SLC7A8, SLC7A10 and SLC7A11), a group of amino-acid antiporters. Heterodimers function as amino acids exchangers, the specificity of the substrate depending on the SLC7A subunit. Heterodimers SLC3A2/SLC7A6 or SLC3A2/SLC7A7 mediate the uptake of dibasic amino acids. Heterodimer SLC3A2/SLC7A11 functions as an antiporter by mediating the exchange of extracellular anionic L-cystine and intracellular L-glutamate across the cellular plasma membrane. SLC3A2/SLC7A10 translocates small neutral L- and D-amino acids across the plasma membrane. SLC3A2/SLC75 or SLC3A2/SLC7A8 translocates neutral amino acids with broad specificity, thyroid hormones and L-DOPA. SLC3A2 is essential for plasma membrane localization, stability, and the transport activity of SLC7A5 and SLC7A8. When associated with LAPTM4B, the heterodimer SLC7A5 is recruited to lysosomes to promote leucine uptake into these organelles, and thereby mediates mTORC1 activation. Modulates integrin-related signaling and is essential for integrin-dependent cell spreading, migration and tumor progression. The chain is Amino acid transporter heavy chain SLC3A2 from Mus musculus (Mouse).